A 115-amino-acid chain; its full sequence is NADH-ubiquinone oxidoreductase chain 3 (115 aa).

A run of 3 helical transmembrane segments spans residues 4–24 (LMVL…AFWL), 55–75 (FFLV…LLPL), and 84–104 (INIM…GLAY).

This sequence belongs to the complex I subunit 3 family. In terms of assembly, core subunit of respiratory chain NADH dehydrogenase (Complex I) which is composed of 45 different subunits. Interacts with TMEM186. Interacts with TMEM242.

The protein resides in the mitochondrion membrane. The enzyme catalyses a ubiquinone + NADH + 5 H(+)(in) = a ubiquinol + NAD(+) + 4 H(+)(out). Functionally, core subunit of the mitochondrial membrane respiratory chain NADH dehydrogenase (Complex I) that is believed to belong to the minimal assembly required for catalysis. Complex I functions in the transfer of electrons from NADH to the respiratory chain. The immediate electron acceptor for the enzyme is believed to be ubiquinone. This chain is NADH-ubiquinone oxidoreductase chain 3, found in Onychomys leucogaster (Northern grasshopper mouse).